The primary structure comprises 309 residues: Mitochondrial brown fat uncoupling protein 1 (309 aa).

At 1–10 the chain is on the mitochondrial intermembrane side; that stretch reads MLRAPGSDAP. A helical membrane pass occupies residues 11-32; that stretch reads PTLSVRIAAAAGAACLADMITF. Solcar repeat units follow at residues 11-104, 113-203, and 212-297; these read PTLS…VREW, ASLG…MKEA, and DDLP…LKRE. The Mitochondrial matrix portion of the chain corresponds to 33 to 75; the sequence is PLDTAKVRLQIQGEGQGQPPRAPRYRGVLGTVATLARTEGLQK. Arg58 contacts fatty acid 16:0. A helical membrane pass occupies residues 76–98; the sequence is LYSGLPAGLQRQVGFASLRIGLY. Over 99–118 the chain is Mitochondrial intermembrane; sequence DSVREWLSPGQGAAASLGSR. The chain crosses the membrane as a helical span at residues 119–135; the sequence is ISAGVMTGGAAVFIGQP. The Mitochondrial matrix segment spans residues 136 to 180; it reads TEVVKVRLQAQSHLHGRKPRYTGTYNAYRIIATTEGLTGLWKGTT. A helical membrane pass occupies residues 181–197; the sequence is PNLMRNVIINCTELVTY. At 198–214 the chain is on the mitochondrial intermembrane side; sequence DLMKEALVKNHLLADDL. A helical transmembrane segment spans residues 215–234; it reads PCHFLSALVAGFCTTVLSSP. The Mitochondrial matrix portion of the chain corresponds to 235–268; sequence VDVVKTRFVNSVPEQYTSVPNCAMTMLTKEGPLA. A Cysteine sulfenic acid (-SOH) modification is found at Cys256. The chain crosses the membrane as a helical span at residues 269-291; the sequence is FFKGFVPSFLRLGSWNVIMFVCF. Lys271 is a fatty acid 16:0 binding site. Topologically, residues 292 to 309 are mitochondrial intermembrane; sequence EQLKRELMKSGRTVDCAT.

Belongs to the mitochondrial carrier (TC 2.A.29) family. As to quaternary structure, most probably functions as a monomer. Binds one purine nucleotide per monomer. However, has also been suggested to function as a homodimer or a homotetramer. Tightly associates with cardiolipin in the mitochondrion inner membrane; may stabilize and regulate its activity. In terms of processing, may undergo sulfenylation upon cold exposure. May increase the sensitivity of UCP1 thermogenic function to the activation by noradrenaline probably through structural effects. May undergo ubiquitin-mediated proteasomal degradation.

It is found in the mitochondrion inner membrane. The enzyme catalyses H(+)(in) = H(+)(out). Its activity is regulated as follows. Has no constitutive proton transporter activity and has to be activated by long-chain fatty acids/LCFAs. Inhibited by purine nucleotides. Both purine nucleotides and LCFAs bind the cytosolic side of the transporter and directly compete to activate or inhibit it. Activated by noradrenaline and reactive oxygen species. Despite lacking canonical translational encoding for selenocysteine, a small pool of the protein has been observed to selectively incorporate selenocysteine at 'Cys-256'. Selenocysteine-modified protein is highly sensitive to redox modification and may constitute a pool of protein highly sensitive to activation by elevated levels of reactive oxygen species (ROS). Functionally, mitochondrial protein responsible for thermogenic respiration, a specialized capacity of brown adipose tissue and beige fat that participates in non-shivering adaptive thermogenesis to temperature and diet variations and more generally to the regulation of energy balance. Functions as a long-chain fatty acid/LCFA and proton symporter, simultaneously transporting one LCFA and one proton through the inner mitochondrial membrane. However, LCFAs remaining associated with the transporter via their hydrophobic tails, it results in an apparent transport of protons activated by LCFAs. Thereby, dissipates the mitochondrial proton gradient and converts the energy of substrate oxydation into heat instead of ATP. Regulates the production of reactive oxygen species/ROS by mitochondria. In Canis lupus familiaris (Dog), this protein is Mitochondrial brown fat uncoupling protein 1.